Here is a 299-residue protein sequence, read N- to C-terminus: MKIGHQFHTVALVGRSNTPGIAEPLASLAACIAKRGFEVVFEADTAQALGSTGYPALTPAEIGARADVAVVLGGDGTMLGIGRQLAPYKTPLIGINHGRLGFITDIPASDMQEVVPMMLAGSYEREERTLLEARIVRNNEPIYHALAFNDVVVNRSGFSGMAELRVSVDGRFMYNQRSDGLIVATPTGSTAYALSSQGPILHPQLQGIVLVPIAPHALSNRPIVLPDDSKIAIQIIGGRDVNVNFDMQSFTALELNDTIEVRRSKHTVPFLHPVGYSYYATLRKKLHWNEHPSNEEDDE.

Asp-75 functions as the Proton acceptor in the catalytic mechanism. NAD(+) contacts are provided by residues 75 to 76, 149 to 150, Arg-177, Asp-179, 190 to 195, Ala-214, and Gln-248; these read DG, ND, and TAYALS.

This sequence belongs to the NAD kinase family. It depends on a divalent metal cation as a cofactor.

It is found in the cytoplasm. It carries out the reaction NAD(+) + ATP = ADP + NADP(+) + H(+). Involved in the regulation of the intracellular balance of NAD and NADP, and is a key enzyme in the biosynthesis of NADP. Catalyzes specifically the phosphorylation on 2'-hydroxyl of the adenosine moiety of NAD to yield NADP. The protein is NAD kinase of Burkholderia thailandensis (strain ATCC 700388 / DSM 13276 / CCUG 48851 / CIP 106301 / E264).